Reading from the N-terminus, the 522-residue chain is Peptide methionine sulfoxide reductase MsrA/MsrB (522 aa).

Residues 17–174 form the Thioredoxin domain; sequence LALGACSPKI…ALALIRNPNA (158 aa). A disulfide bond links C68 and C71. Residues 199 to 354 form a peptide methionine sulfoxide reductase A region; it reads RTIYLAGGCF…PNGYCHIDIR (156 aa). C207 is an active-site residue. The MsrB domain occupies 383–506; sequence DAELKRTLTE…NGASLKFIPL (124 aa). Residues C440 and C495 are joined by a disulfide bond. C495 (nucleophile) is an active-site residue.

In the N-terminal section; belongs to the thioredoxin family. It in the central section; belongs to the MsrA Met sulfoxide reductase family. This sequence in the C-terminal section; belongs to the MsrB Met sulfoxide reductase family.

It catalyses the reaction L-methionyl-[protein] + [thioredoxin]-disulfide + H2O = L-methionyl-(S)-S-oxide-[protein] + [thioredoxin]-dithiol. It carries out the reaction [thioredoxin]-disulfide + L-methionine + H2O = L-methionine (S)-S-oxide + [thioredoxin]-dithiol. The enzyme catalyses L-methionyl-[protein] + [thioredoxin]-disulfide + H2O = L-methionyl-(R)-S-oxide-[protein] + [thioredoxin]-dithiol. Has an important function as a repair enzyme for proteins that have been inactivated by oxidation. Catalyzes the reversible oxidation-reduction of methionine sulfoxide in proteins to methionine. The polypeptide is Peptide methionine sulfoxide reductase MsrA/MsrB (msrAB) (Neisseria gonorrhoeae).